A 289-amino-acid polypeptide reads, in one-letter code: Energy-coupling factor transporter ATP-binding protein EcfA2 (289 aa).

The ABC transporter domain occupies 3–245 (IEFKNVDYVY…QEWVKKHYLD (243 aa)). An ATP-binding site is contributed by 40 to 47 (GHTGSGKS).

It belongs to the ABC transporter superfamily. Energy-coupling factor EcfA family. As to quaternary structure, forms a stable energy-coupling factor (ECF) transporter complex composed of 2 membrane-embedded substrate-binding proteins (S component), 2 ATP-binding proteins (A component) and 2 transmembrane proteins (T component).

Its subcellular location is the cell membrane. Functionally, ATP-binding (A) component of a common energy-coupling factor (ECF) ABC-transporter complex. Unlike classic ABC transporters this ECF transporter provides the energy necessary to transport a number of different substrates. In Lactobacillus johnsonii (strain CNCM I-12250 / La1 / NCC 533), this protein is Energy-coupling factor transporter ATP-binding protein EcfA2.